The primary structure comprises 316 residues: Ecto-ADP-ribosyltransferase 5 (316 aa).

The N-terminal stretch at 1-23 is a signal peptide; it reads MIQATLLISLSCLSFYTLGSGVR. A disulfide bridge links cysteine 50 with cysteine 266. N-linked (GlcNAc...) asparagine glycosylation is present at asparagine 68. Residues 70 to 261 form the TR mART core domain; that stretch reads TRLRESWETA…MTLSSSDQMC (192 aa). Residue tyrosine 107 coordinates NAD(+). An N-linked (GlcNAc...) asparagine glycan is attached at asparagine 109. The NAD(+) site is built by arginine 168 and glutamine 188. Residue arginine 168 is part of the active site. The active site involves serine 191. Serine 222 contributes to the NAD(+) binding site. Glutamate 229 is a catalytic residue. N-linked (GlcNAc...) asparagine glycosylation is found at asparagine 242 and asparagine 248.

This sequence belongs to the Arg-specific ADP-ribosyltransferase family.

The protein localises to the secreted. The protein resides in the membrane. The catalysed reaction is L-arginyl-[protein] + NAD(+) = N(omega)-(ADP-D-ribosyl)-L-arginyl-[protein] + nicotinamide + H(+). The sequence is that of Ecto-ADP-ribosyltransferase 5 (ART5) from Bos taurus (Bovine).